The following is a 638-amino-acid chain: MPVVTLPDGSRREFDHPVTLLQVAEAIGPGLAKAALAGRVDGRLVDLSHRIEADAEVALVTARDADGVEVIRHSTAHLLAQAVKALYPKAQVTIGPVIQDGFYYDFSYERPFTPEDLEAIEAKMHELAAQALPVERRTMPREEAIAYFRSLGEAYKAEIIEAIPRGEVISLYSQGDFTDLCRGPHVPDTGRLNAFKLMKIAGAYWRGDSRNEMLQRIYGTAWGDRKDLAAYLQRLEEAERRDHRKLGKALDLFHMQEEAPGMVFWHPKGWILWQEIEQYMRRVFRDNGYQEIRTPLVVARTLWERSGHWEKFSDEMFTTASEERDYAIKPMNCPCHVQVYNQGLKSYRDLPLRLAEFGSCHRNELSGALHGLMRVRGFTQDDAHIFCTEEQIQDEVSRFIDLLFKVYADFGFSEVQIKLSTRPEKRVGSDEVWDKAEHALETALNAKGLAWDLQPGEGAFYGPKIEFSLKDCLDRVWQCGTIQVDFSMPDRLGATYVAEDGARHVPVMLHRAILGSLERFVGILTEHYAGQYPLWLAPVQAVVLNITDRQADYAREVAQEFVSKGFRVIADLRNEKVGFKIREHSMQRVPYLLIVGDKEVEAGSVSLRTRDGKDHGSFGIGDLVAKFTEETMKRAVSH.

Residues 1–61 enclose the TGS domain; sequence MPVVTLPDGS…EADAEVALVT (61 aa). Residues 242–533 are catalytic; sequence DHRKLGKALD…LTEHYAGQYP (292 aa). 3 residues coordinate Zn(2+): Cys-333, His-384, and His-510.

The protein belongs to the class-II aminoacyl-tRNA synthetase family. In terms of assembly, homodimer. It depends on Zn(2+) as a cofactor.

The protein resides in the cytoplasm. The catalysed reaction is tRNA(Thr) + L-threonine + ATP = L-threonyl-tRNA(Thr) + AMP + diphosphate + H(+). Its function is as follows. Catalyzes the attachment of threonine to tRNA(Thr) in a two-step reaction: L-threonine is first activated by ATP to form Thr-AMP and then transferred to the acceptor end of tRNA(Thr). Also edits incorrectly charged L-seryl-tRNA(Thr). This chain is Threonine--tRNA ligase, found in Methylococcus capsulatus (strain ATCC 33009 / NCIMB 11132 / Bath).